We begin with the raw amino-acid sequence, 1940 residues long: Rho GTPase-activating protein 32 (1940 aa).

The PX; atypical domain occupies 154-248 (SKELVFLVQI…LTWMEIDNKG (95 aa)). An SH3 domain is found at 262–324 (PAIAAAHVIK…PSECVELIND (63 aa)). Residues 375 to 570 (CDLGEHLLNS…FILNHVEVLF (196 aa)) form the Rho-GAP domain. Disordered regions lie at residues 646-746 (FPSE…LSAS), 1035-1163 (RANQ…FSVT), 1219-1264 (FTTG…PPVR), 1430-1454 (KHPRSRNKPDYMPSMSPGVRSYTED), and 1675-1786 (RSRS…HSSA). The segment covering 1047–1061 (PQGASASESPQELSH) has biased composition (polar residues). Composition is skewed to low complexity over residues 1081 to 1094 (LALALAESAQQASA) and 1145 to 1163 (SRKTSPATPPSTTSSFSVT). Residues 1691-1707 (ETKDVRYPGRTEGDERT) show a composition bias toward basic and acidic residues. The span at 1725–1734 (PQKQSGSSRS) shows a compositional bias: polar residues. Residues 1736–1755 (MQHDISTEQHSQDTLHRQPS) show a composition bias toward basic and acidic residues.

The protein belongs to the PX domain-containing GAP family.

Its subcellular location is the cytoplasm. It is found in the membrane. It localises to the cell membrane. In terms of biological role, GTPase-activating protein (GAP) promoting GTP hydrolysis on RHOA, CDC42 and RAC1 small GTPases. The sequence is that of Rho GTPase-activating protein 32 (arhgap32) from Xenopus laevis (African clawed frog).